A 586-amino-acid polypeptide reads, in one-letter code: Eukaryotic translation initiation factor 3 subunit D (586 aa).

The disordered stretch occupies residues phenylalanine 107–arginine 154. Residues glycine 108–alanine 131 show a composition bias toward gly residues. The RNA gate stretch occupies residues serine 301–proline 315. Positions phenylalanine 566 to glutamine 577 are enriched in acidic residues. The tract at residues phenylalanine 566–alanine 586 is disordered.

This sequence belongs to the eIF-3 subunit D family. As to quaternary structure, component of the eukaryotic translation initiation factor 3 (eIF-3) complex.

The protein localises to the cytoplasm. MRNA cap-binding component of the eukaryotic translation initiation factor 3 (eIF-3) complex, which is involved in protein synthesis of a specialized repertoire of mRNAs and, together with other initiation factors, stimulates binding of mRNA and methionyl-tRNAi to the 40S ribosome. The eIF-3 complex specifically targets and initiates translation of a subset of mRNAs involved in cell proliferation. In the eIF-3 complex, eif3d specifically recognizes and binds the 7-methylguanosine cap of a subset of mRNAs. The polypeptide is Eukaryotic translation initiation factor 3 subunit D (Emericella nidulans (strain FGSC A4 / ATCC 38163 / CBS 112.46 / NRRL 194 / M139) (Aspergillus nidulans)).